The chain runs to 515 residues: Bifunctional purine biosynthesis protein PurH (515 aa).

The MGS-like domain maps to 1-145; the sequence is MTKRVLISVS…KNHASVTVVV (145 aa).

The protein belongs to the PurH family.

It carries out the reaction (6R)-10-formyltetrahydrofolate + 5-amino-1-(5-phospho-beta-D-ribosyl)imidazole-4-carboxamide = 5-formamido-1-(5-phospho-D-ribosyl)imidazole-4-carboxamide + (6S)-5,6,7,8-tetrahydrofolate. The catalysed reaction is IMP + H2O = 5-formamido-1-(5-phospho-D-ribosyl)imidazole-4-carboxamide. Its pathway is purine metabolism; IMP biosynthesis via de novo pathway; 5-formamido-1-(5-phospho-D-ribosyl)imidazole-4-carboxamide from 5-amino-1-(5-phospho-D-ribosyl)imidazole-4-carboxamide (10-formyl THF route): step 1/1. It functions in the pathway purine metabolism; IMP biosynthesis via de novo pathway; IMP from 5-formamido-1-(5-phospho-D-ribosyl)imidazole-4-carboxamide: step 1/1. This is Bifunctional purine biosynthesis protein PurH from Streptococcus pneumoniae (strain JJA).